The chain runs to 180 residues: Sec-independent protein translocase protein TatB (180 aa).

Residues 1–21 (MFDIGWSELLVIGVVALIAIG) form a helical membrane-spanning segment. Residues 77–180 (TRGDLMTRLT…DQTARGAKAS (104 aa)) are disordered. Positions 105–129 (ADKPSVSSDAASASGSAAPEAGAAE) are enriched in low complexity.

The protein belongs to the TatB family. As to quaternary structure, the Tat system comprises two distinct complexes: a TatABC complex, containing multiple copies of TatA, TatB and TatC subunits, and a separate TatA complex, containing only TatA subunits. Substrates initially bind to the TatABC complex, which probably triggers association of the separate TatA complex to form the active translocon.

It localises to the cell inner membrane. Functionally, part of the twin-arginine translocation (Tat) system that transports large folded proteins containing a characteristic twin-arginine motif in their signal peptide across membranes. Together with TatC, TatB is part of a receptor directly interacting with Tat signal peptides. TatB may form an oligomeric binding site that transiently accommodates folded Tat precursor proteins before their translocation. The sequence is that of Sec-independent protein translocase protein TatB from Nitrobacter winogradskyi (strain ATCC 25391 / DSM 10237 / CIP 104748 / NCIMB 11846 / Nb-255).